Reading from the N-terminus, the 232-residue chain is MTQTNDSPSIKAKKAAALKAVEFVQDQMIIGLGTGSTIAYFIEALGKRCQAGLKITAIASSERSMRQARLVGIPIVDSDTILELDLTIDGADEIDPLKQMIKGGGGALLREKLIASASKEMIVVIDETKLVNKLGKFPVATEISIFTFRHIVKKLKDHGYCGSLRVNQDQSLYRTDNGNYIFDICFPEPIDNPIFEHNRLKSFAGVLETGLFFNLAGRVIIGYQNGMTKIVA.

Residues 34-37, 89-92, and 102-105 each bind substrate; these read TGST, DGAD, and KGGG. The active-site Proton acceptor is glutamate 111. Lysine 129 is a binding site for substrate.

Belongs to the ribose 5-phosphate isomerase family. As to quaternary structure, homodimer.

It carries out the reaction aldehydo-D-ribose 5-phosphate = D-ribulose 5-phosphate. Its pathway is carbohydrate degradation; pentose phosphate pathway; D-ribose 5-phosphate from D-ribulose 5-phosphate (non-oxidative stage): step 1/1. Catalyzes the reversible conversion of ribose-5-phosphate to ribulose 5-phosphate. This is Ribose-5-phosphate isomerase A from Protochlamydia amoebophila (strain UWE25).